Here is a 255-residue protein sequence, read N- to C-terminus: Putative cysteine-rich repeat secretory protein 10 (255 aa).

The N-terminal stretch at 1 to 26 (MFSSSVSISILVVVAMQFSFIHNVLS) is a signal peptide. 2 Gnk2-homologous domains span residues 33–134 (YLQH…EIYT) and 140–252 (FKHY…LYPF).

It belongs to the cysteine-rich repeat secretory protein family.

The protein resides in the secreted. This is Putative cysteine-rich repeat secretory protein 10 (CRRSP10) from Arabidopsis thaliana (Mouse-ear cress).